Consider the following 449-residue polypeptide: Hyaluronidase-1 (449 aa).

The N-terminal stretch at 1-23 (MYHIWIKFLAAWIFLKRFNGVHV) is a signal peptide. 2 cysteine pairs are disulfide-bonded: Cys47–Cys340 and Cys211–Cys227. Residues Asn67, Asn103, and Asn111 are each glycosylated (N-linked (GlcNAc...) asparagine). The active-site Proton donor is the Glu135. Asn153 carries N-linked (GlcNAc...) asparagine glycosylation. N-linked (GlcNAc...) asparagine glycosylation occurs at Asn357. Intrachain disulfides connect Cys365/Cys376, Cys370/Cys427, and Cys429/Cys438. Asn401 carries an N-linked (GlcNAc...) asparagine glycan. Residues 427–438 (CQCYQGWKGLYC) form the EGF-like domain.

Belongs to the glycosyl hydrolase 56 family. As to quaternary structure, monomer. As to expression, expressed by the venom gland.

It localises to the secreted. It catalyses the reaction Random hydrolysis of (1-&gt;4)-linkages between N-acetyl-beta-D-glucosamine and D-glucuronate residues in hyaluronate.. Its function is as follows. Snake venom endo-hyaluronidase that degrades hyaluronan to smaller oligosaccharide fragments. In venom, it is not toxic by itself, but increases the diffusion of other venom proteins by degrading the extracellular matrix. In addition, it displays antiedematogenic activity. The chain is Hyaluronidase-1 from Cerastes cerastes (Horned desert viper).